Consider the following 112-residue polypeptide: Tetracenomycin-F1 monooxygenase (112 aa).

Positions F11–V100 constitute an ABM domain.

As to quaternary structure, homotrimer.

The enzyme catalyses tetracenomycin F1 + O2 = tetracenomycin D3 + H2O + H(+). The protein operates within antibiotic biosynthesis; tetracenomycin C biosynthesis. With respect to regulation, inhibited by p-chloromercuribenzoic acid, N-ethylmaleimide and diethyl pyrocarbonate. In terms of biological role, oxygenase required for conversion of tetracenomycin F1 to tetracenomycin D3. In Streptomyces glaucescens, this protein is Tetracenomycin-F1 monooxygenase (tcmH).